Reading from the N-terminus, the 133-residue chain is Hemoglobin subunit alpha-2 (133 aa).

In terms of domain architecture, Globin spans 1–133; that stretch reads NVKAVWEHVK…VKNVLTSRYR (133 aa). Residue His50 coordinates O2. Heme b is bound at residue His79.

It belongs to the globin family. Minor hemoglobin is a heterotetramer of two alpha-2 chains and two beta-2 chains. As to expression, red blood cells.

In terms of biological role, involved in oxygen transport from the lung to the various peripheral tissues. The chain is Hemoglobin subunit alpha-2 from Pleurodeles waltl (Iberian ribbed newt).